Here is a 241-residue protein sequence, read N- to C-terminus: Probable transcriptional regulatory protein Neut_0281 (241 aa).

Belongs to the TACO1 family.

It localises to the cytoplasm. The polypeptide is Probable transcriptional regulatory protein Neut_0281 (Nitrosomonas eutropha (strain DSM 101675 / C91 / Nm57)).